A 311-amino-acid polypeptide reads, in one-letter code: tRNA pseudouridine synthase B (311 aa).

Residue His-43 participates in substrate binding. Asp-48 (nucleophile) is an active-site residue. Tyr-76, Tyr-179, and Leu-200 together coordinate substrate.

Belongs to the pseudouridine synthase TruB family. Type 1 subfamily.

It carries out the reaction uridine(55) in tRNA = pseudouridine(55) in tRNA. In terms of biological role, responsible for synthesis of pseudouridine from uracil-55 in the psi GC loop of transfer RNAs. This chain is tRNA pseudouridine synthase B, found in Sodalis glossinidius (strain morsitans).